Here is a 263-residue protein sequence, read N- to C-terminus: Small ribosomal subunit protein eS4 (263 aa).

Residues 42-104 form the S4 RNA-binding domain; the sequence is LPLIIFLRNR…TGEHFRLVYD (63 aa).

It belongs to the eukaryotic ribosomal protein eS4 family. Component of the small ribosomal subunit.

The protein resides in the cytoplasm. In terms of biological role, component of the small ribosomal subunit. The ribosome is a large ribonucleoprotein complex responsible for the synthesis of proteins in the cell. This Xenopus laevis (African clawed frog) protein is Small ribosomal subunit protein eS4 (rps4).